A 178-amino-acid polypeptide reads, in one-letter code: Large ribosomal subunit protein uL6 (178 aa).

Belongs to the universal ribosomal protein uL6 family. Part of the 50S ribosomal subunit.

This protein binds to the 23S rRNA, and is important in its secondary structure. It is located near the subunit interface in the base of the L7/L12 stalk, and near the tRNA binding site of the peptidyltransferase center. This is Large ribosomal subunit protein uL6 from Bacillus licheniformis (strain ATCC 14580 / DSM 13 / JCM 2505 / CCUG 7422 / NBRC 12200 / NCIMB 9375 / NCTC 10341 / NRRL NRS-1264 / Gibson 46).